Reading from the N-terminus, the 290-residue chain is uncharacterized protein (290 aa).

5 helical membrane passes run 14–34 (ALLNIFAYVILAVVKLVIGIL), 82–102 (ISSLVASFIMMAVGIEVLIGG), 115–135 (NLIAAWTALGSAVFMYGIYLY), 158–174 (DAFVSAGAFIGVFSSQL), and 176–196 (LPWVDPVTAFIIGIIICKTAW).

It belongs to the cation diffusion facilitator (CDF) transporter (TC 2.A.4) family.

Its subcellular location is the cell membrane. This is an uncharacterized protein from Bacillus subtilis (strain 168).